The sequence spans 278 residues: Pantothenate synthetase (278 aa).

28-35 provides a ligand contact to ATP; it reads MGNLHAGH. Residue His-35 is the Proton donor of the active site. Gln-59 is a binding site for (R)-pantoate. Beta-alanine is bound at residue Gln-59. 145–148 provides a ligand contact to ATP; the sequence is GKKD. Gln-151 is a binding site for (R)-pantoate. ATP is bound at residue 182–185; it reads LSSR.

This sequence belongs to the pantothenate synthetase family. As to quaternary structure, homodimer.

It localises to the cytoplasm. It carries out the reaction (R)-pantoate + beta-alanine + ATP = (R)-pantothenate + AMP + diphosphate + H(+). It participates in cofactor biosynthesis; (R)-pantothenate biosynthesis; (R)-pantothenate from (R)-pantoate and beta-alanine: step 1/1. Catalyzes the condensation of pantoate with beta-alanine in an ATP-dependent reaction via a pantoyl-adenylate intermediate. The chain is Pantothenate synthetase from Methylobacillus flagellatus (strain ATCC 51484 / DSM 6875 / VKM B-1610 / KT).